Reading from the N-terminus, the 309-residue chain is MSEDQRVISQPIELHKLSIVDKHSQGQQQQPHQKQHEVQPESKSPRVTTPLKPKRLAIPISSPQRSTTNQSPVSDHASPISTDQDLIYKLAAKHREINELSFKLEVAQKELKQLELQFKDTLPRNGQQKLGNQNPSEYLSTFTKRIQQTFVDVNNSPNMLKGKKSINDFFSKPNNNVNSNINNTLPNRKPNPPPNRSQRMQNIAPSRSSESTPTSGPPLLPPRNTMKNANTTATAGENTPFLQRILNKFNQMNMEEDEFDDLLEKRKSKKDHYYIKENLGYEYDEVRSEDEDDEEFEPMGDIPVHLFKR.

Disordered regions lie at residues 1-80 (MSED…ASPI), 164-240 (KSIN…ENTP), and 286-309 (VRSE…LFKR). Composition is skewed to basic and acidic residues over residues 13–24 (ELHKLSIVDKHS) and 34–44 (KQHEVQPESKS). A phosphoserine mark is found at Ser-44, Ser-71, Ser-74, Ser-78, and Ser-165. Residues 61 to 80 (SSPQRSTTNQSPVSDHASPI) show a composition bias toward polar residues. Composition is skewed to low complexity over residues 174–188 (NNNV…LPNR), 205–214 (PSRSSESTPT), and 222–239 (PRNT…GENT). The span at 287 to 298 (RSEDEDDEEFEP) shows a compositional bias: acidic residues. A Phosphoserine modification is found at Ser-288.

Functionally, may be involved in actin cytoskeleton organization and biogenesis. The polypeptide is Assembly-complementing factor 4 (ACF4) (Saccharomyces cerevisiae (strain ATCC 204508 / S288c) (Baker's yeast)).